We begin with the raw amino-acid sequence, 499 residues long: Centrosomal protein of 57 kDa (499 aa).

Positions 1-35 (MAAASVSETSASQFSNILAEPSKSNGSMVRHSSSP) are enriched in polar residues. A disordered region spans residues 1 to 58 (MAAASVSETSASQFSNILAEPSKSNGSMVRHSSSPYVVYPPDKPFLNSDLRRSPNKPT). S53 is modified (phosphoserine). A centrosome localization domain (CLD) region spans residues 58-239 (TFAYPESNSR…KAAQLQTGLE (182 aa)). The stretch at 63-241 (ESNSRAIFSA…AQLQTGLEVN (179 aa)) forms a coiled coil. Residues 277–490 (AVQPHYRLCL…KDMQSIQNSL (214 aa)) are mediates interaction with microtubules. 2 disordered regions span residues 334-357 (KQVSSRTGKSKKSATPPSSSSVNE) and 431-476 (KQKK…SRKN). Over residues 346 to 357 (SATPPSSSSVNE) the composition is skewed to low complexity. A coiled-coil region spans residues 389–450 (TVELKDNLEC…KTLDEEGNSS (62 aa)). The span at 431–444 (KQKKELKATRKTLD) shows a compositional bias: basic and acidic residues. Positions 449–459 (SSSRSTTTGTT) are enriched in low complexity. The segment covering 460-474 (NKKDFAKPRPGEKSR) has biased composition (basic and acidic residues).

The protein belongs to the translokin family. As to quaternary structure, homodimer and homooligomer. Interacts with FGF2 and RAP80. Does not interact with FGF1 or FGF2 isoform 24 kDa. Interacts with microtubules.

The protein resides in the nucleus. It is found in the cytoplasm. It localises to the cytoskeleton. The protein localises to the microtubule organizing center. Its subcellular location is the centrosome. Functionally, centrosomal protein which may be required for microtubule attachment to centrosomes. May act by forming ring-like structures around microtubules. Mediates nuclear translocation and mitogenic activity of the internalized growth factor FGF2. This chain is Centrosomal protein of 57 kDa (CEP57), found in Bos taurus (Bovine).